Consider the following 306-residue polypeptide: Putative NylC-analogous protein (306 aa).

The protein belongs to the peptidase S58 family.

The polypeptide is Putative NylC-analogous protein (Agromyces sp. (strain KY5R)).